Reading from the N-terminus, the 200-residue chain is Transgelin (200 aa).

Ser-2 is subject to N-acetylserine. Ser-11 is subject to Phosphoserine. Residues 26 to 136 form the Calponin-homology (CH) domain; the sequence is PEAIQNIKIW…QTLKSLSRYA (111 aa). Residues 144–168 are disordered; it reads FPVLGPQLSTKKPRPPVKSKPKHLQ. An interaction with SH3 domain of ABP1 region spans residues 151-164; sequence LSTKKPRPPVKSKP. Positions 154–165 are enriched in basic residues; that stretch reads KKPRPPVKSKPK.

Binds to actin. Interacts with ABP1.

Its subcellular location is the cytoplasm. The protein resides in the cytoskeleton. The protein localises to the actin patch. In terms of biological role, has actin-binding and actin-bundling activity. Stabilizes actin filaments against disassembly. The sequence is that of Transgelin (SCP1) from Saccharomyces cerevisiae (strain ATCC 204508 / S288c) (Baker's yeast).